Reading from the N-terminus, the 136-residue chain is Small ribosomal subunit protein uS8c (136 aa).

Belongs to the universal ribosomal protein uS8 family. In terms of assembly, part of the 30S ribosomal subunit.

It is found in the plastid. The protein localises to the chloroplast. One of the primary rRNA binding proteins, it binds directly to 16S rRNA central domain where it helps coordinate assembly of the platform of the 30S subunit. The protein is Small ribosomal subunit protein uS8c (rps8) of Morus indica (Mulberry).